A 466-amino-acid chain; its full sequence is Exodeoxyribonuclease 7 large subunit (466 aa).

This sequence belongs to the XseA family. Heterooligomer composed of large and small subunits.

It is found in the cytoplasm. The catalysed reaction is Exonucleolytic cleavage in either 5'- to 3'- or 3'- to 5'-direction to yield nucleoside 5'-phosphates.. Functionally, bidirectionally degrades single-stranded DNA into large acid-insoluble oligonucleotides, which are then degraded further into small acid-soluble oligonucleotides. The sequence is that of Exodeoxyribonuclease 7 large subunit from Vesicomyosocius okutanii subsp. Calyptogena okutanii (strain HA).